A 122-amino-acid chain; its full sequence is Autophagy-related protein 8b (122 aa).

Residue G117 is the site of Phosphatidylethanolamine amidated glycine attachment. Positions 118-122 are cleaved as a propeptide — removed in mature form; sequence GSFYC.

This sequence belongs to the ATG8 family. Interacts with ATG4. Interacts with NBR1. The C-terminal 5 residues are removed by ATG4 to expose Gly-117 at the C-terminus. This Gly-117 forms then a thioester bond with the 'Cys-558' of ATG7 (E1-like activating enzyme) before being transferred to the 'Cys-258' of ATG3 (the specific E2 conjugating enzyme), in order to be finally amidated with phosphatidylethanolamine. This lipid modification anchors ATG8 to autophagosomes. Constitutively expressed.

It localises to the cytoplasmic vesicle. It is found in the autophagosome membrane. The protein localises to the vacuole membrane. Its subcellular location is the cytoplasm. The protein resides in the cytoskeleton. Ubiquitin-like modifier involved in autophagosomes formation. May mediate the delivery of the autophagosomes to the vacuole via the microtubule cytoskeleton. The sequence is that of Autophagy-related protein 8b (ATG8B) from Arabidopsis thaliana (Mouse-ear cress).